The following is a 365-amino-acid chain: Aminomethyltransferase (365 aa).

This sequence belongs to the GcvT family. In terms of assembly, the glycine cleavage system is composed of four proteins: P, T, L and H.

The enzyme catalyses N(6)-[(R)-S(8)-aminomethyldihydrolipoyl]-L-lysyl-[protein] + (6S)-5,6,7,8-tetrahydrofolate = N(6)-[(R)-dihydrolipoyl]-L-lysyl-[protein] + (6R)-5,10-methylene-5,6,7,8-tetrahydrofolate + NH4(+). Its function is as follows. The glycine cleavage system catalyzes the degradation of glycine. The polypeptide is Aminomethyltransferase (Desulfitobacterium hafniense (strain DSM 10664 / DCB-2)).